A 97-amino-acid polypeptide reads, in one-letter code: Co-chaperonin GroES (97 aa).

This sequence belongs to the GroES chaperonin family. In terms of assembly, heptamer of 7 subunits arranged in a ring. Interacts with the chaperonin GroEL.

It is found in the cytoplasm. Its function is as follows. Together with the chaperonin GroEL, plays an essential role in assisting protein folding. The GroEL-GroES system forms a nano-cage that allows encapsulation of the non-native substrate proteins and provides a physical environment optimized to promote and accelerate protein folding. GroES binds to the apical surface of the GroEL ring, thereby capping the opening of the GroEL channel. This Pseudomonas entomophila (strain L48) protein is Co-chaperonin GroES.